Consider the following 700-residue polypeptide: Elongation factor G (700 aa).

Residues threonine 10 to leucine 286 form the tr-type G domain. Residues alanine 19–threonine 26, aspartate 83–histidine 87, and asparagine 137–aspartate 140 contribute to the GTP site.

The protein belongs to the TRAFAC class translation factor GTPase superfamily. Classic translation factor GTPase family. EF-G/EF-2 subfamily.

It localises to the cytoplasm. Catalyzes the GTP-dependent ribosomal translocation step during translation elongation. During this step, the ribosome changes from the pre-translocational (PRE) to the post-translocational (POST) state as the newly formed A-site-bound peptidyl-tRNA and P-site-bound deacylated tRNA move to the P and E sites, respectively. Catalyzes the coordinated movement of the two tRNA molecules, the mRNA and conformational changes in the ribosome. This is Elongation factor G from Kineococcus radiotolerans (strain ATCC BAA-149 / DSM 14245 / SRS30216).